The sequence spans 542 residues: CTP synthase (542 aa).

The tract at residues Met1 to Ile265 is amidoligase domain. Position 13 (Ser13) interacts with CTP. Ser13 lines the UTP pocket. Ser14–Ile19 contributes to the ATP binding site. Position 54 (Tyr54) interacts with L-glutamine. Residue Asp71 participates in ATP binding. Asp71 and Glu139 together coordinate Mg(2+). CTP contacts are provided by residues Asp146–Glu148, Lys186–Gln191, and Lys222. UTP contacts are provided by residues Lys186–Gln191 and Lys222. A Glutamine amidotransferase type-1 domain is found at Thr291 to Leu541. Ala353 contacts L-glutamine. Cys380 serves as the catalytic Nucleophile; for glutamine hydrolysis. Residues Phe381–Gln384, Glu404, and Arg469 each bind L-glutamine. Residues His514 and Glu516 contribute to the active site.

It belongs to the CTP synthase family. As to quaternary structure, homotetramer.

It catalyses the reaction UTP + L-glutamine + ATP + H2O = CTP + L-glutamate + ADP + phosphate + 2 H(+). It carries out the reaction L-glutamine + H2O = L-glutamate + NH4(+). The enzyme catalyses UTP + NH4(+) + ATP = CTP + ADP + phosphate + 2 H(+). The protein operates within pyrimidine metabolism; CTP biosynthesis via de novo pathway; CTP from UDP: step 2/2. With respect to regulation, allosterically activated by GTP, when glutamine is the substrate; GTP has no effect on the reaction when ammonia is the substrate. The allosteric effector GTP functions by stabilizing the protein conformation that binds the tetrahedral intermediate(s) formed during glutamine hydrolysis. Inhibited by the product CTP, via allosteric rather than competitive inhibition. Its function is as follows. Catalyzes the ATP-dependent amination of UTP to CTP with either L-glutamine or ammonia as the source of nitrogen. Regulates intracellular CTP levels through interactions with the four ribonucleotide triphosphates. In Bartonella quintana (strain Toulouse) (Rochalimaea quintana), this protein is CTP synthase.